Here is a 69-residue protein sequence, read N- to C-terminus: U-scoloptoxin(21)-Sm2a (69 aa).

The signal sequence occupies residues 1-21 (MFFLGFIIVCASEEQSDNRLP). Positions 46–69 (ANDPNGPGRRRRSPIVREEILRHP) are disordered. The span at 60 to 69 (IVREEILRHP) shows a compositional bias: basic and acidic residues.

The protein belongs to the scoloptoxin-21 family. Expressed by the venom gland.

Its subcellular location is the secreted. The chain is U-scoloptoxin(21)-Sm2a from Scolopendra morsitans (Tanzanian blue ringleg centipede).